Reading from the N-terminus, the 88-residue chain is YcgL domain-containing protein HI_1446 (88 aa).

Residues 1 to 85 enclose the YcgL domain; the sequence is MLCAIYKSKK…QDDGLFNSLS (85 aa).

The protein is YcgL domain-containing protein HI_1446 of Haemophilus influenzae (strain ATCC 51907 / DSM 11121 / KW20 / Rd).